The following is a 384-amino-acid chain: MNALDLPKAPHETRVVVAMSGGVDSSVVAGLLKRQGFDVVGVTLQLYDHGAASHRKGACCAGQDIHDARAAAEHLGIPHYVLDYEDRFRDEVIEKFAESYLAGETPIPCVECNRTVKFRDLLGLARDLDADALATGHYVASRALPGGGRALHRALDPARDQSYFLYATTAEQLDFLRFPLGEMEKTETRALAKELGLSLAEKPDSQDICFVPQGRYSDVIARLRPDAARPGEIVDLDGHVLGRHDGIVHYTVGQRKGLGLSGPEPLYVVRLEPDAARVVVGPRTALATTRIRLSDLNWLGEGPAEAVRDLPVAVRVRSTRPPRPATLTVGPDGAVEVVLAEPEDGVSPGQACAIYADDGPRARVLGGGTIRRVDALSARPREAA.

Residues 18 to 25 (AMSGGVDS) and Leu-44 contribute to the ATP site. The active-site Nucleophile is the Cys-112. Residues Cys-112 and Cys-209 are joined by a disulfide bond. Gly-136 contacts ATP. An interaction with tRNA region spans residues 159–161 (RDQ). Cys-209 acts as the Cysteine persulfide intermediate in catalysis.

This sequence belongs to the MnmA/TRMU family.

It localises to the cytoplasm. It catalyses the reaction S-sulfanyl-L-cysteinyl-[protein] + uridine(34) in tRNA + AH2 + ATP = 2-thiouridine(34) in tRNA + L-cysteinyl-[protein] + A + AMP + diphosphate + H(+). Its function is as follows. Catalyzes the 2-thiolation of uridine at the wobble position (U34) of tRNA, leading to the formation of s(2)U34. The protein is tRNA-specific 2-thiouridylase MnmA of Methylobacterium radiotolerans (strain ATCC 27329 / DSM 1819 / JCM 2831 / NBRC 15690 / NCIMB 10815 / 0-1).